The primary structure comprises 141 residues: Large ribosomal subunit protein uL11 (141 aa).

Belongs to the universal ribosomal protein uL11 family. Part of the ribosomal stalk of the 50S ribosomal subunit. Interacts with L10 and the large rRNA to form the base of the stalk. L10 forms an elongated spine to which L12 dimers bind in a sequential fashion forming a multimeric L10(L12)X complex. Post-translationally, one or more lysine residues are methylated.

Functionally, forms part of the ribosomal stalk which helps the ribosome interact with GTP-bound translation factors. This is Large ribosomal subunit protein uL11 from Lactobacillus delbrueckii subsp. bulgaricus (strain ATCC 11842 / DSM 20081 / BCRC 10696 / JCM 1002 / NBRC 13953 / NCIMB 11778 / NCTC 12712 / WDCM 00102 / Lb 14).